Consider the following 196-residue polypeptide: uncharacterized protein (196 aa).

A helical transmembrane segment spans residues 71-87 (YVKLIGTGCYVAILISG).

The protein localises to the membrane. This is an uncharacterized protein from Dictyostelium discoideum (Social amoeba).